The sequence spans 138 residues: Isochorismatase-like protein asqB (138 aa).

It belongs to the isochorismatase family.

The catalysed reaction is [(1'E)-5'-(3',3'-dimethyloxiran-2'-yl)-3'-hydroxy-3'-methylpent-1'-en-1'-yl]-quinolinone B = yaequinolone C. It participates in secondary metabolite biosynthesis. The protein operates within alkaloid biosynthesis. It functions in the pathway mycotoxin biosynthesis. In terms of biological role, isochorismatase-like protein; part of the gene cluster that mediates the biosynthesis of the aspoquinolone mycotoxins. Within the pathway, asqB converts [(1'E)-5'-(3',3'-dimethyloxiran-2'-yl)-3'-hydroxy-3'-methylpent-1'-en-1'-yl]-quinolinone B into yaequinolone C. The first step of the pathway is catalyzed by the nonribosomal peptide synthetase asqK that condenses anthranilic acid and O-methyl-L-tyrosine to produce 4'-methoxycyclopeptin. 4'-methoxycyclopeptin is then converted to 4'-methoxydehydrocyclopeptin by the ketoglutarate-dependent dioxygenase asqJ. AsqJ also converts its first product 4'-methoxydehydrocyclopeptin to 4'-methoxycyclopenin. The following conversion of 4'-methoxycyclopenin into 4'-methoxyviridicatin is catalyzed by the cyclopenase asqI. 4'-methoxyviridicatin is the precursor of quinolone natural products, and is further converted to quinolinone B. The prenyltransferase asqH1 then catalyzes the canonical Friedel-Crafts alkylation of quinolinone B with dimethylallyl cation to yield dimethylallyl quinolone, which is subjected to FAD-dependent dehydrogenation by the FAD-linked oxidoreductase asqF to yield conjugated aryl diene. The delta(3') double bond then serves as the site of the second alkylation with DMAPP catalyzed by the prenyltransferase asqH2 to yield a carbenium ion intermediate, which can be attacked by H(2)O to yield a styrenyl quinolone containing a C3'-hydroxyprenyl chain. The FAD-dependent monooxygenase asqG performs epoxidation of the terminal C7'-C8' olefin. Finally, after dehydratation of the epoxide at C3 by asqC, the quinolone epoxide rearrangement protein asqO catalyzes an enzymatic 3-exo-tet cyclization to yield the cyclopropyl-THF ring system in aspoquinolone. The chain is Isochorismatase-like protein asqB from Emericella nidulans (strain FGSC A4 / ATCC 38163 / CBS 112.46 / NRRL 194 / M139) (Aspergillus nidulans).